A 365-amino-acid chain; its full sequence is Protein RecA (365 aa).

81–88 is a binding site for ATP; sequence GPESSGKT.

This sequence belongs to the RecA family.

The protein localises to the cytoplasm. Functionally, can catalyze the hydrolysis of ATP in the presence of single-stranded DNA, the ATP-dependent uptake of single-stranded DNA by duplex DNA, and the ATP-dependent hybridization of homologous single-stranded DNAs. It interacts with LexA causing its activation and leading to its autocatalytic cleavage. The protein is Protein RecA of Borreliella afzelii (strain PKo) (Borrelia afzelii).